The following is a 1104-amino-acid chain: Extended synaptotagmin-1 (1104 aa).

At M1 the chain carries N-acetylmethionine. At 1–38 (MERSPGEGPSPSPTDQPSAPSDPTGQPPAAHAKPDPGS) the chain is on the cytoplasmic side. The tract at residues 1–47 (MERSPGEGPSPSPTDQPSAPSDPTGQPPAAHAKPDPGSGGQPAGPGA) is disordered. Over residues 15 to 24 (DQPSAPSDPT) the composition is skewed to polar residues. A compositionally biased stretch (gly residues) spans 37–47 (GSGGQPAGPGA). The chain crosses the membrane as a helical span at residues 39–59 (GGQPAGPGAAGEALAVLTSFG). At 60–62 (KRL) the chain is on the lumenal side. Residues 63-83 (LVLIPVYLAGAVGLSVGFVLF) form a helical membrane-spanning segment. The Cytoplasmic segment spans residues 84-1104 (GLALYLGWRR…LMDDKDKGSS (1021 aa)). Residues 91–116 (WRRVRDEKERSLRAARQLLDDEEQLT) adopt a coiled-coil conformation. One can recognise an SMP-LTD domain in the interval 135–313 (DVEKAEWLNK…LPNRLLVPLV (179 aa)). C2 domains lie at 312–433 (LVPD…DDWF), 460–580 (QVLQ…QLSS), 627–751 (SVDA…DEWL), and 777–899 (LEEV…TLNS). S324 carries the post-translational modification Phosphoserine; by CDK5. Ca(2+) is bound by residues K344, D345, D357, D404, D406, D408, D410, and D411. 3 disordered regions span residues 617 to 641 (VDSE…TPDS), 813 to 833 (RKGT…TSHK), and 924 to 950 (SHSY…VTSS). K817 carries the post-translational modification N6-acetyllysine. 2 positions are modified to phosphoserine: S820 and S941. Low complexity predominate over residues 925–946 (HSYSHSSSSLSEEPELSGGPPH). T948 carries the post-translational modification Phosphothreonine. Residues S949 and S963 each carry the phosphoserine modification. The region spanning 971 to 1093 (PLGQVKLTVW…DLSQGVARWY (123 aa)) is the C2 5 domain. At Y1009 the chain carries Phosphotyrosine. The required for phosphatidylinositol 4,5-bisphosphate-dependent location at the cell membrane stretch occupies residues 1018 to 1025 (KNRGTKRK). S1034 is modified (phosphoserine).

Belongs to the extended synaptotagmin family. Interacts with ESYT2 and ESYT3. Interacts with ADGRD1; inhibiting the G-protein-coupled receptor activity of ADGRD1. Interaction with ADGRD1 is abolished when cytosolic calcium increases, relieving ADGRD1 G-protein-coupled receptor activity. Interacts (phosphorylated form) with SLC2A4. Phosphorylated on Ser residues in insulin-treated adipocytes (in vitro); this promotes interaction with SLC2A4.

The protein localises to the endoplasmic reticulum membrane. It is found in the cell membrane. Binds calcium (via the C2 domains) and translocates to sites of contact between the endoplasmic reticulum and the cell membrane in response to increased cytosolic calcium levels. Helps tether the endoplasmic reticulum to the cell membrane and promotes the formation of appositions between the endoplasmic reticulum and the cell membrane. Acts as an inhibitor of ADGRD1 G-protein-coupled receptor activity in absence of cytosolic calcium. Binds glycerophospholipids in a barrel-like domain and may play a role in cellular lipid transport. This chain is Extended synaptotagmin-1 (ESYT1), found in Pongo abelii (Sumatran orangutan).